Here is a 104-residue protein sequence, read N- to C-terminus: Ig kappa chain V region XP-1 (104 aa).

Residues 1–24 (ADIVMTQTPASVSEPVGGTVTIKC) are framework-1. The tract at residues 25–35 (QASQSIFBBLA) is complementarity-determining-1. The tract at residues 36–49 (WYQKPGZPPKGLLY) is framework-2. A complementarity-determining-2 region spans residues 50–56 (TBYTLAS). The framework-3 stretch occupies residues 57-88 (GVSSRFSGGGSGTBFTLTISDLECABAATYYC). The tract at residues 89-100 (EXTGVSZBXBKG) is complementarity-determining-3. The interval 101-104 (FGGG) is framework-4.

The protein is Ig kappa chain V region XP-1 of Oryctolagus cuniculus (Rabbit).